The following is a 148-amino-acid chain: MSGSMSSVFSLLYLLSVCSACYISNCPIGGKRAVQDLPSRQCMSCGPGDRGRCFGPSICCGEGLGCLLGSPETLRCQEEDFLPSPCEAGGKMCGYEGRCAAPGVCCDSEGCSMDQSCVNGDATAFGQPDLLLKLLHLSNHAHPYRLHQ.

The first 20 residues, 1 to 20 (MSGSMSSVFSLLYLLSVCSA), serve as a signal peptide directing secretion. Cys-21 and Cys-26 are joined by a disulfide. Gly-29 is subject to Glycine amide. Intrachain disulfides connect Cys-42–Cys-86, Cys-45–Cys-59, Cys-53–Cys-76, Cys-60–Cys-66, Cys-93–Cys-105, Cys-99–Cys-117, and Cys-106–Cys-111.

This sequence belongs to the vasopressin/oxytocin family.

Isotocin causes contraction of smooth muscles. In Catostomus commersonii (White sucker), this protein is Isotocin-neurophysin IT 2.